A 113-amino-acid polypeptide reads, in one-letter code: Hemerythrin (113 aa).

Histidine 25, histidine 54, glutamate 58, histidine 73, histidine 77, histidine 101, and aspartate 106 together coordinate Fe cation.

It belongs to the hemerythrin family. Homooctamer.

Its function is as follows. Hemerythrin is a respiratory protein in blood cells of certain marine worms. The oxygen-binding site in each chain contains two iron atoms. This chain is Hemerythrin, found in Themiste dyscrita (Peanut worm).